A 451-amino-acid chain; its full sequence is Ubiquitin hydrolase B (451 aa).

The 432-residue stretch at 19-450 (RGLINTSNTC…EAYLLLYQLV (432 aa)) folds into the USP domain. A compositionally biased stretch (low complexity) spans 83-115 (NNSNSTTTTSSSSTTATTTSTSNNNKSQTPTSP). The interval 83 to 154 (NNSNSTTTTS…PPINPKHFND (72 aa)) is disordered. The segment covering 116–135 (IQQHHQSQTNGLSNQPSVAT) has biased composition (polar residues). His-399 serves as the catalytic Nucleophile. His-408 serves as the catalytic Proton acceptor.

This sequence belongs to the peptidase C19 family. In terms of assembly, interacts with mkkA (via F-box/WD40 domains).

It carries out the reaction Thiol-dependent hydrolysis of ester, thioester, amide, peptide and isopeptide bonds formed by the C-terminal Gly of ubiquitin (a 76-residue protein attached to proteins as an intracellular targeting signal).. Functionally, required for proper prespore cell patterning. Plays a role in stabilizing mkkA by preventing it from being targeted for degradation. ubcB and ubpB differentially control ubiquitination/deubiquitination and degradation of mkkA in a cell-type-specific and temporally regulated manner. This chain is Ubiquitin hydrolase B (ubpB), found in Dictyostelium discoideum (Social amoeba).